Here is a 175-residue protein sequence, read N- to C-terminus: Large ribosomal subunit protein uL10 (175 aa).

This sequence belongs to the universal ribosomal protein uL10 family. In terms of assembly, part of the ribosomal stalk of the 50S ribosomal subunit. The N-terminus interacts with L11 and the large rRNA to form the base of the stalk. The C-terminus forms an elongated spine to which L12 dimers bind in a sequential fashion forming a multimeric L10(L12)X complex.

Its function is as follows. Forms part of the ribosomal stalk, playing a central role in the interaction of the ribosome with GTP-bound translation factors. This chain is Large ribosomal subunit protein uL10, found in Synechococcus sp. (strain CC9605).